Consider the following 771-residue polypeptide: Protein translocase subunit SecA 2 (771 aa).

Residues glutamine 91, 109–113 (GEGKT), and aspartate 496 each bind ATP.

This sequence belongs to the SecA family. As to quaternary structure, monomer and homodimer. Part of the essential Sec protein translocation apparatus which comprises SecA, SecYEG and auxiliary proteins SecDF. Other proteins may also be involved.

It localises to the cell membrane. It is found in the cytoplasm. The catalysed reaction is ATP + H2O + cellular proteinSide 1 = ADP + phosphate + cellular proteinSide 2.. Part of the Sec protein translocase complex. Interacts with the SecYEG preprotein conducting channel. Has a central role in coupling the hydrolysis of ATP to the transfer of proteins into and across the cell membrane, serving as an ATP-driven molecular motor driving the stepwise translocation of polypeptide chains across the membrane. The protein is Protein translocase subunit SecA 2 of Corynebacterium jeikeium (strain K411).